The following is a 267-amino-acid chain: MKKYRVQPDGRFELKRFDPDDTSAFEGGKQAALEALAVLNRRLEKLQELLYAEGQHKVLVVLQAMDAGGKDGTIRVVFDGVNPSGVRVASFGVPTEQELARDYLWRVHQQVPRKGELVIFNRSHYEDVLVVRVKNLVPQQVWQKRYRHIREFERMLADEGTTILKFFLHISKDEQRQRLQERLDNPEKRWKFRMGDLEDRRLWDRYQEAYEAAIRETSTEYAPWYVIPANKNWYRNWLVSHILVETLEGLAMQYPQPETASEKIVIE.

Belongs to the polyphosphate kinase 2 (PPK2) family. Class III subfamily. The cofactor is Mn(2+).

It catalyses the reaction [phosphate](n) + ADP = [phosphate](n+1) + AMP. The enzyme catalyses [phosphate](n) + ATP = [phosphate](n+1) + ADP. Functionally, uses inorganic polyphosphate (polyP) as a donor to convert both AMP to ADP and ADP to ATP. Can also use GMP, CMP, UMP, GDP, CDP and UDP. The sequence is that of AMP/ADP-polyphosphate phosphotransferase from Meiothermus ruber (strain ATCC 35948 / DSM 1279 / VKM B-1258 / 21) (Thermus ruber).